The following is a 443-amino-acid chain: Ribulose bisphosphate carboxylase large chain (443 aa).

Residues N89 and T139 each contribute to the substrate site. The active-site Proton acceptor is K141. K143 serves as a coordination point for substrate. Positions 167, 169, and 170 each coordinate Mg(2+). K167 carries the post-translational modification N6-carboxylysine. The active-site Proton acceptor is H260. Residues R261, H293, and S345 each contribute to the substrate site.

It belongs to the RuBisCO large chain family. Type I subfamily. Heterohexadecamer of 8 large chains and 8 small chains; disulfide-linked. The disulfide link is formed within the large subunit homodimers. It depends on Mg(2+) as a cofactor. Post-translationally, the disulfide bond which can form in the large chain dimeric partners within the hexadecamer appears to be associated with oxidative stress and protein turnover.

Its subcellular location is the plastid. It is found in the chloroplast. The enzyme catalyses 2 (2R)-3-phosphoglycerate + 2 H(+) = D-ribulose 1,5-bisphosphate + CO2 + H2O. It carries out the reaction D-ribulose 1,5-bisphosphate + O2 = 2-phosphoglycolate + (2R)-3-phosphoglycerate + 2 H(+). Functionally, ruBisCO catalyzes two reactions: the carboxylation of D-ribulose 1,5-bisphosphate, the primary event in carbon dioxide fixation, as well as the oxidative fragmentation of the pentose substrate in the photorespiration process. Both reactions occur simultaneously and in competition at the same active site. The polypeptide is Ribulose bisphosphate carboxylase large chain (Buddleja davidii (Butterfly bush)).